The chain runs to 264 residues: THAP domain-containing protein 10 (264 aa).

A THAP-type zinc finger spans residues 1–90 (MPARCVAAHC…LVAGAVPTLH (90 aa)). Disordered regions lie at residues 90-136 (HRVP…PRAG) and 160-195 (TQPH…KRPR). The segment covering 99 to 122 (GGEEGDQAGRPDTRGELQAARHSE) has biased composition (basic and acidic residues). Positions 160–175 (TQPHADNPSNTVTSVP) are enriched in polar residues.

The chain is THAP domain-containing protein 10 (THAP10) from Pongo abelii (Sumatran orangutan).